We begin with the raw amino-acid sequence, 154 residues long: uncharacterized protein (154 aa).

This is an uncharacterized protein from Archaeoglobus fulgidus (strain ATCC 49558 / DSM 4304 / JCM 9628 / NBRC 100126 / VC-16).